The sequence spans 54 residues: VTSYTLNEVVPLKDVVPEWVRIGFSATTGAEFAAHEVLSWSFHSELGETSASKQ.

It belongs to the leguminous lectin family. As to quaternary structure, tetramer of two alpha and two beta chains.

This chain is Lectin alpha-1 chain, found in Lathyrus cicera (Flat-pod pea).